The following is a 716-amino-acid chain: Fatty acid oxidation complex subunit alpha (716 aa).

Positions 1–189 (MIYQSPTIQV…KVGAIDAVVA (189 aa)) are enoyl-CoA hydratase/isomerase. Asp-296 is a substrate binding site. The 3-hydroxyacyl-CoA dehydrogenase stretch occupies residues 311–716 (KDVNQAAVLG…AANNGSYYQA (406 aa)). Residues Met-324, Asp-343, 400–402 (VVE), Lys-407, and Ser-429 contribute to the NAD(+) site. The active-site For 3-hydroxyacyl-CoA dehydrogenase activity is His-450. Position 453 (Asn-453) interacts with NAD(+). Positions 500 and 660 each coordinate substrate.

It in the N-terminal section; belongs to the enoyl-CoA hydratase/isomerase family. In the C-terminal section; belongs to the 3-hydroxyacyl-CoA dehydrogenase family. In terms of assembly, heterotetramer of two alpha chains (FadB) and two beta chains (FadA).

It catalyses the reaction a (3S)-3-hydroxyacyl-CoA + NAD(+) = a 3-oxoacyl-CoA + NADH + H(+). It carries out the reaction a (3S)-3-hydroxyacyl-CoA = a (2E)-enoyl-CoA + H2O. The catalysed reaction is a 4-saturated-(3S)-3-hydroxyacyl-CoA = a (3E)-enoyl-CoA + H2O. The enzyme catalyses (3S)-3-hydroxybutanoyl-CoA = (3R)-3-hydroxybutanoyl-CoA. It catalyses the reaction a (3Z)-enoyl-CoA = a 4-saturated (2E)-enoyl-CoA. It carries out the reaction a (3E)-enoyl-CoA = a 4-saturated (2E)-enoyl-CoA. The protein operates within lipid metabolism; fatty acid beta-oxidation. Functionally, involved in the aerobic and anaerobic degradation of long-chain fatty acids via beta-oxidation cycle. Catalyzes the formation of 3-oxoacyl-CoA from enoyl-CoA via L-3-hydroxyacyl-CoA. It can also use D-3-hydroxyacyl-CoA and cis-3-enoyl-CoA as substrate. This is Fatty acid oxidation complex subunit alpha from Shewanella frigidimarina (strain NCIMB 400).